Here is a 116-residue protein sequence, read N- to C-terminus: Peptidyl-tRNA hydrolase (116 aa).

It belongs to the PTH2 family.

Its subcellular location is the cytoplasm. It catalyses the reaction an N-acyl-L-alpha-aminoacyl-tRNA + H2O = an N-acyl-L-amino acid + a tRNA + H(+). The natural substrate for this enzyme may be peptidyl-tRNAs which drop off the ribosome during protein synthesis. This chain is Peptidyl-tRNA hydrolase, found in Methanococcus maripaludis (strain C6 / ATCC BAA-1332).